Here is an 81-residue protein sequence, read N- to C-terminus: Bursicon (81 aa).

As to quaternary structure, heterodimer of burs and pburs. In terms of tissue distribution, central nervous system. Coexpressed with CCAP in most CCAP-specific neurons. Coexpressed with pburs in the large bilateral lateral neurosecretory neurons of the first three unfused abdominal ganglia and in all anterior bilateral cell pairs in the thoracic ganglia.

The protein resides in the secreted. Final heterodimeric neurohormone released at the end of the molting cycle, involved in the sclerotization (tanning) of the insect cuticle, melanization and wing spreading. In Periplaneta americana (American cockroach), this protein is Bursicon (burs).